The following is a 161-amino-acid chain: S-ribosylhomocysteine lyase (161 aa).

The Fe cation site is built by H58, H62, and C128.

The protein belongs to the LuxS family. As to quaternary structure, homodimer. The cofactor is Fe cation.

It carries out the reaction S-(5-deoxy-D-ribos-5-yl)-L-homocysteine = (S)-4,5-dihydroxypentane-2,3-dione + L-homocysteine. Involved in the synthesis of autoinducer 2 (AI-2) which is secreted by bacteria and is used to communicate both the cell density and the metabolic potential of the environment. The regulation of gene expression in response to changes in cell density is called quorum sensing. Catalyzes the transformation of S-ribosylhomocysteine (RHC) to homocysteine (HC) and 4,5-dihydroxy-2,3-pentadione (DPD). This chain is S-ribosylhomocysteine lyase, found in Bifidobacterium adolescentis (strain ATCC 15703 / DSM 20083 / NCTC 11814 / E194a).